Consider the following 542-residue polypeptide: CTP synthase (542 aa).

The segment at 1–265 (MARYVFITGG…DSEILSAFGI (265 aa)) is amidoligase domain. S13 contacts CTP. S13 provides a ligand contact to UTP. 14–19 (SLGKGI) contacts ATP. L-glutamine is bound at residue Y54. Residue D71 participates in ATP binding. The Mg(2+) site is built by D71 and E139. Residues 146–148 (DIE), 186–191 (KTKPTQ), and K222 contribute to the CTP site. UTP-binding positions include 186–191 (KTKPTQ) and K222. In terms of domain architecture, Glutamine amidotransferase type-1 spans 291-541 (TIAIVGKYTG…IAATVEQSRL (251 aa)). Position 353 (A353) interacts with L-glutamine. C380 (nucleophile; for glutamine hydrolysis) is an active-site residue. L-glutamine is bound by residues 381 to 384 (FGMQ), E404, and R469. Catalysis depends on residues H514 and E516.

Belongs to the CTP synthase family. Homotetramer.

It catalyses the reaction UTP + L-glutamine + ATP + H2O = CTP + L-glutamate + ADP + phosphate + 2 H(+). The enzyme catalyses L-glutamine + H2O = L-glutamate + NH4(+). It carries out the reaction UTP + NH4(+) + ATP = CTP + ADP + phosphate + 2 H(+). Its pathway is pyrimidine metabolism; CTP biosynthesis via de novo pathway; CTP from UDP: step 2/2. Allosterically activated by GTP, when glutamine is the substrate; GTP has no effect on the reaction when ammonia is the substrate. The allosteric effector GTP functions by stabilizing the protein conformation that binds the tetrahedral intermediate(s) formed during glutamine hydrolysis. Inhibited by the product CTP, via allosteric rather than competitive inhibition. In terms of biological role, catalyzes the ATP-dependent amination of UTP to CTP with either L-glutamine or ammonia as the source of nitrogen. Regulates intracellular CTP levels through interactions with the four ribonucleotide triphosphates. This is CTP synthase from Bartonella bacilliformis (strain ATCC 35685 / KC583 / Herrer 020/F12,63).